The primary structure comprises 191 residues: MSKNRLPAYPALANELRSASLGINPAELQGLLTGMLSGGLSLNDKSWQALVFDYTNDGMGWPIGALASAEQILLAMSAQLVDTDFELSLLLPEGEGEEALFELADAVAEWINHFISGLGLSGANLKHASVEAKEALEDLEEMSKLGIDEEDDLAEQAELLEQVIEHIKACVLVLHAEFGVKPEQDTKPTVH.

This sequence belongs to the UPF0149 family.

This is UPF0149 protein VCM66_2399 from Vibrio cholerae serotype O1 (strain M66-2).